A 246-amino-acid polypeptide reads, in one-letter code: NLP effector protein Pc118548 (246 aa).

Positions 1 to 19 (MNFRAFLLAAIAGIATINA) are cleaved as a signal peptide. The short motif at 122–128 (GHRHYWE) is the Hepta-peptide GHRHDWE motif element. Asparagine 141 carries N-linked (GlcNAc...) asparagine glycosylation.

The protein belongs to the Necrosis inducing protein (NPP1) family.

The protein localises to the secreted. Secreted effector that contributes strongly to virulence during infection by P.capsici. Induces cell death in the Solanaceae, including Nicotiana benthamiana and hot pepper. The protein is NLP effector protein Pc118548 of Phytophthora capsici.